Consider the following 201-residue polypeptide: tRNA (guanine-N(7)-)-methyltransferase (201 aa).

S-adenosyl-L-methionine-binding residues include E33, E58, D85, and D108. D108 is a catalytic residue. The substrate site is built by K112 and D144.

The protein belongs to the class I-like SAM-binding methyltransferase superfamily. TrmB family.

The enzyme catalyses guanosine(46) in tRNA + S-adenosyl-L-methionine = N(7)-methylguanosine(46) in tRNA + S-adenosyl-L-homocysteine. The protein operates within tRNA modification; N(7)-methylguanine-tRNA biosynthesis. In terms of biological role, catalyzes the formation of N(7)-methylguanine at position 46 (m7G46) in tRNA. This chain is tRNA (guanine-N(7)-)-methyltransferase, found in Anaeromyxobacter dehalogenans (strain 2CP-C).